Here is a 128-residue protein sequence, read N- to C-terminus: Pi-hexatoxin-Hi1c (128 aa).

A signal peptide spans 1–19 (MKLRITLALTSVLAFCVFG). A propeptide spanning residues 20–47 (DKENENLMENLLEDDLLDIFTDAIHMER) is cleaved from the precursor. 6 disulfides stabilise this stretch: cysteine 54–cysteine 69, cysteine 61–cysteine 74, cysteine 68–cysteine 84, cysteine 93–cysteine 108, cysteine 100–cysteine 113, and cysteine 107–cysteine 124. Domain repeat units follow at residues 54-84 (CIAK…HEVC) and 93-124 (CLEK…HPVC). Residues 54-124 (CIAKWKSCAG…ERRGNKHPVC (71 aa)) are 2 X approximate repeats with cysteine pattern C-C-CC-C-C.

It belongs to the psalmotoxin-1 family. Double-knot toxin subfamily. As to expression, expressed by the venom gland.

It is found in the secreted. Its function is as follows. This toxin potently and selectively inhibits ASIC1a, an isoform of the gene ASIC1. It incompletely inhibits ASIC1a activation in a pH-independent and slowly reversible manner. This toxin acts by binding to and stabilizing the closed state of the channel, thereby impeding the transition into a conducting state. This toxin may bind to the acidic pocket of ASIC1a, since mutation of a key residue of this pocket (Arg-350) abolishes the ability of the toxin to inhibit ASIC1a. In vivo, this toxin protects the brain from neuronal injury when administered up to 8 hours after stroke onset. The sequence is that of Pi-hexatoxin-Hi1c from Hadronyche infensa (Fraser island funnel-web spider).